Reading from the N-terminus, the 432-residue chain is Anaerobic glycerol-3-phosphate dehydrogenase subunit B (432 aa).

Belongs to the anaerobic G-3-P dehydrogenase subunit B family. As to quaternary structure, composed of a catalytic GlpA/B dimer and of membrane bound GlpC. Requires FMN as cofactor.

The enzyme catalyses a quinone + sn-glycerol 3-phosphate = dihydroxyacetone phosphate + a quinol. Its pathway is polyol metabolism; glycerol degradation via glycerol kinase pathway; glycerone phosphate from sn-glycerol 3-phosphate (anaerobic route): step 1/1. Its function is as follows. Conversion of glycerol 3-phosphate to dihydroxyacetone. Uses fumarate or nitrate as electron acceptor. This is Anaerobic glycerol-3-phosphate dehydrogenase subunit B from Histophilus somni (strain 129Pt) (Haemophilus somnus).